A 453-amino-acid chain; its full sequence is Kynurenine 3-monooxygenase (453 aa).

It belongs to the aromatic-ring hydroxylase family. KMO subfamily. The cofactor is FAD.

The enzyme catalyses L-kynurenine + NADPH + O2 + H(+) = 3-hydroxy-L-kynurenine + NADP(+) + H2O. Its pathway is cofactor biosynthesis; NAD(+) biosynthesis; quinolinate from L-kynurenine: step 1/3. Catalyzes the hydroxylation of L-kynurenine (L-Kyn) to form 3-hydroxy-L-kynurenine (L-3OHKyn). Required for synthesis of quinolinic acid. The chain is Kynurenine 3-monooxygenase from Salinispora tropica (strain ATCC BAA-916 / DSM 44818 / JCM 13857 / NBRC 105044 / CNB-440).